The chain runs to 136 residues: uncharacterized protein (136 aa).

Disordered regions lie at residues 23 to 44 (QESLKSRIEDKNGDVASPKEDN) and 56 to 95 (DGVITSEEGCSSSGEKENSGLCSEESSEEDPEEAEEESAR). Residues 61–79 (SEEGCSSSGEKENSGLCSE) show a composition bias toward low complexity. Positions 80 to 91 (ESSEEDPEEAEE) are enriched in acidic residues.

This is an uncharacterized protein from Saccharomyces cerevisiae (strain ATCC 204508 / S288c) (Baker's yeast).